A 152-amino-acid polypeptide reads, in one-letter code: MDMIVEYLFCCKYTTNNKIIDLLEDLATRKVKCNLTAKLDQYGENYHQLYLDVLKNFKDVCTSTTQQDGTVIKNWSSIRKKNLKDLILKNFIIEVKYRYGFDDQTTENLKRDINMRLNFKTIGDKTIIIKNNKIKKIVGLNLTTNNYSWDES.

Belongs to the IIV-6 145L family.

This is an uncharacterized protein from Invertebrate iridescent virus 3 (IIV-3).